The following is a 284-amino-acid chain: MYVVSTKQMLNNAQRGGYAVPAFNIHNLETMQVVVETAANLHAPVIIAGTPGTFTHAGIENLLALVSAMAKQYHHLLAIHLDHHTKFDDIAQKVRSGVRSVMIDASHLPFAQNISRVKEVVDFCHRFDVSVEAELGQLGGQEDDVQVNEADALYTNPVQAREFAEATGIDSLAVAIGTAHGMYASAPALDFSRLENIRQWVNLPLVLHGASGLSTKDIQQTIKLGICKINVATELKNSFSQALKNYLTEHPEATDPRDYLQSAKSAMRDVVSKVIADCGCEGRA.

Aspartate 82 acts as the Proton donor in catalysis. Residues histidine 83 and histidine 180 each coordinate Zn(2+). A dihydroxyacetone phosphate-binding site is contributed by glycine 181. Residue histidine 208 coordinates Zn(2+). Dihydroxyacetone phosphate contacts are provided by residues 209 to 211 and 230 to 233; these read GAS and NVAT.

This sequence belongs to the class II fructose-bisphosphate aldolase family. TagBP aldolase GatY subfamily. As to quaternary structure, forms a complex with GatZ. Zn(2+) serves as cofactor.

The catalysed reaction is D-tagatofuranose 1,6-bisphosphate = D-glyceraldehyde 3-phosphate + dihydroxyacetone phosphate. It participates in carbohydrate metabolism; D-tagatose 6-phosphate degradation; D-glyceraldehyde 3-phosphate and glycerone phosphate from D-tagatose 6-phosphate: step 2/2. Catalytic subunit of the tagatose-1,6-bisphosphate aldolase GatYZ, which catalyzes the reversible aldol condensation of dihydroxyacetone phosphate (DHAP or glycerone-phosphate) with glyceraldehyde 3-phosphate (G3P) to produce tagatose 1,6-bisphosphate (TBP). Requires GatZ subunit for full activity and stability. Is involved in the catabolism of galactitol. The chain is D-tagatose-1,6-bisphosphate aldolase subunit GatY from Shigella dysenteriae serotype 1 (strain Sd197).